The sequence spans 250 residues: tRNA (guanine-N(1)-)-methyltransferase (250 aa).

S-adenosyl-L-methionine-binding positions include glycine 113 and 133 to 138; that span reads VGDYVL.

It belongs to the RNA methyltransferase TrmD family. Homodimer.

The protein resides in the cytoplasm. The enzyme catalyses guanosine(37) in tRNA + S-adenosyl-L-methionine = N(1)-methylguanosine(37) in tRNA + S-adenosyl-L-homocysteine + H(+). Specifically methylates guanosine-37 in various tRNAs. The chain is tRNA (guanine-N(1)-)-methyltransferase from Proteus mirabilis (strain HI4320).